Consider the following 68-residue polypeptide: MGDPAAYRDSTQIVLPVGTLEDIEVDLEAEFMVSVFRPTDAEIVRIIGSPVVIKEVTEFLTRHGVHMP.

The protein is Protein VNG_1110C of Halobacterium salinarum (strain ATCC 700922 / JCM 11081 / NRC-1) (Halobacterium halobium).